The chain runs to 345 residues: S-adenosylmethionine:tRNA ribosyltransferase-isomerase (345 aa).

Belongs to the QueA family. Monomer.

Its subcellular location is the cytoplasm. The enzyme catalyses 7-aminomethyl-7-carbaguanosine(34) in tRNA + S-adenosyl-L-methionine = epoxyqueuosine(34) in tRNA + adenine + L-methionine + 2 H(+). The protein operates within tRNA modification; tRNA-queuosine biosynthesis. In terms of biological role, transfers and isomerizes the ribose moiety from AdoMet to the 7-aminomethyl group of 7-deazaguanine (preQ1-tRNA) to give epoxyqueuosine (oQ-tRNA). This chain is S-adenosylmethionine:tRNA ribosyltransferase-isomerase, found in Thermodesulfovibrio yellowstonii (strain ATCC 51303 / DSM 11347 / YP87).